A 256-amino-acid polypeptide reads, in one-letter code: Ras-related protein Rab-26 (256 aa).

Residues 1 to 51 (MSRKKTPKSKGASTPAASTLPTANGARPARSGTALSGPDAPPNGPLQPGRP) form a disordered region. The span at 12–23 (ASTPAASTLPTA) shows a compositional bias: low complexity. Residues Ser-72, Gly-73, Val-74, Gly-75, Lys-76, Thr-77, Cys-78, Ser-95, and Thr-96 each contribute to the GTP site. Mg(2+) is bound at residue Thr-77. 2 consecutive short sequence motifs (switch) follow at residues 86–101 (GAFLAGTFISTVGIDF) and 119–136 (DTAGQERFRSVTHAYYRD). 2 residues coordinate Mg(2+): Thr-96 and Asp-119. GTP contacts are provided by Gly-122, Asn-177, Lys-178, Asp-180, Ala-208, and Lys-209. S-geranylgeranyl cysteine attachment occurs at residues Cys-253 and Cys-254.

The protein belongs to the small GTPase superfamily. Rab family. Interacts with RIMS1. Interacts with ADRA2B. Mg(2+) is required as a cofactor. As to expression, predominantly expressed in brain.

It is found in the golgi apparatus membrane. The protein localises to the cytoplasmic vesicle. Its subcellular location is the secretory vesicle membrane. It carries out the reaction GTP + H2O = GDP + phosphate + H(+). Its activity is regulated as follows. Regulated by guanine nucleotide exchange factors (GEFs) which promote the exchange of bound GDP for free GTP. Regulated by GTPase activating proteins (GAPs) which increase the GTP hydrolysis activity. Inhibited by GDP dissociation inhibitors (GDIs). The small GTPases Rab are key regulators of intracellular membrane trafficking, from the formation of transport vesicles to their fusion with membranes. Rabs cycle between an inactive GDP-bound form and an active GTP-bound form that is able to recruit to membranes different set of downstream effectors directly responsible for vesicle formation, movement, tethering and fusion. RAB26 mediates transport of ADRA2A and ADRA2B from the Golgi to the cell membrane. Plays a role in the maturation of zymogenic granules and in pepsinogen secretion in the stomach. Plays a role in the secretion of amylase from acinar granules in the parotid gland. This is Ras-related protein Rab-26 from Homo sapiens (Human).